The sequence spans 279 residues: Ribosomal RNA small subunit methyltransferase A (279 aa).

Asn-28, Leu-30, Gly-55, Glu-77, Asp-103, and Asn-122 together coordinate S-adenosyl-L-methionine.

Belongs to the class I-like SAM-binding methyltransferase superfamily. rRNA adenine N(6)-methyltransferase family. RsmA subfamily.

It is found in the cytoplasm. It catalyses the reaction adenosine(1518)/adenosine(1519) in 16S rRNA + 4 S-adenosyl-L-methionine = N(6)-dimethyladenosine(1518)/N(6)-dimethyladenosine(1519) in 16S rRNA + 4 S-adenosyl-L-homocysteine + 4 H(+). In terms of biological role, specifically dimethylates two adjacent adenosines (A1518 and A1519) in the loop of a conserved hairpin near the 3'-end of 16S rRNA in the 30S particle. May play a critical role in biogenesis of 30S subunits. The chain is Ribosomal RNA small subunit methyltransferase A from Ruegeria pomeroyi (strain ATCC 700808 / DSM 15171 / DSS-3) (Silicibacter pomeroyi).